The sequence spans 99 residues: Large ribosomal subunit protein bL21 (99 aa).

It belongs to the bacterial ribosomal protein bL21 family. In terms of assembly, part of the 50S ribosomal subunit. Contacts protein L20.

Functionally, this protein binds to 23S rRNA in the presence of protein L20. The sequence is that of Large ribosomal subunit protein bL21 from Mesoplasma florum (strain ATCC 33453 / NBRC 100688 / NCTC 11704 / L1) (Acholeplasma florum).